Reading from the N-terminus, the 563-residue chain is Inclusion body clearance protein IML2 (563 aa).

It belongs to the IML2 family. Interacts with lipid droplet proteins.

It is found in the cytoplasm. It localises to the nucleus. In terms of biological role, inclusion body (IB) resident protein that interacts strongly with lipid droplet (LD) proteins. Involved in LD-mediated IB clearing after protein folding stress, probably by enabling access to the IBs of an LD-stored soluble sterol derivative that acts as a chaperone in inclusion clearing. In Schizosaccharomyces pombe (strain 972 / ATCC 24843) (Fission yeast), this protein is Inclusion body clearance protein IML2.